Consider the following 77-residue polypeptide: Large ribosomal subunit protein bL31 (77 aa).

The protein belongs to the bacterial ribosomal protein bL31 family. Type A subfamily. As to quaternary structure, part of the 50S ribosomal subunit.

Functionally, binds the 23S rRNA. This is Large ribosomal subunit protein bL31 from Synechococcus elongatus (strain ATCC 33912 / PCC 7942 / FACHB-805) (Anacystis nidulans R2).